The sequence spans 345 residues: S-adenosylmethionine:tRNA ribosyltransferase-isomerase (345 aa).

It belongs to the QueA family. As to quaternary structure, monomer.

Its subcellular location is the cytoplasm. It catalyses the reaction 7-aminomethyl-7-carbaguanosine(34) in tRNA + S-adenosyl-L-methionine = epoxyqueuosine(34) in tRNA + adenine + L-methionine + 2 H(+). It participates in tRNA modification; tRNA-queuosine biosynthesis. Transfers and isomerizes the ribose moiety from AdoMet to the 7-aminomethyl group of 7-deazaguanine (preQ1-tRNA) to give epoxyqueuosine (oQ-tRNA). The chain is S-adenosylmethionine:tRNA ribosyltransferase-isomerase from Shewanella halifaxensis (strain HAW-EB4).